Reading from the N-terminus, the 1010-residue chain is 2-oxoglutarate dehydrogenase-like, mitochondrial (1010 aa).

The transit peptide at 1 to 73 directs the protein to the mitochondrion; the sequence is MSQLRLLPSR…RSVHKSWDSF (73 aa). Residues H130, D143, and D145 each contribute to the Ca(2+) site. Thiamine diphosphate-binding residues include R299, D398, N431, I433, and Q663. 3 residues coordinate Mg(2+): D398, N431, and I433.

This sequence belongs to the alpha-ketoglutarate dehydrogenase family. In terms of assembly, the OGDHC complex comprises multiple copies of three catalytic enzyme components, the 2-oxoglutarate dehydrogenase (OGDH/E1), the dihydrolipoamide dehydrogenase (DLST/E2) and the dihydrolipoamide dehydrogenase (DLD/E3). OGDHL/E1-like isoenzyme may replace OGDH in the OGDHC complex in the brain. The presence of either ODGH/E1 or ODGHL/E1-like isoenzyme in the complex may depend on its tissular distribution. The cofactor is thiamine diphosphate. Mg(2+) is required as a cofactor.

The protein localises to the mitochondrion matrix. It carries out the reaction N(6)-[(R)-lipoyl]-L-lysyl-[protein] + 2-oxoglutarate + H(+) = N(6)-[(R)-S(8)-succinyldihydrolipoyl]-L-lysyl-[protein] + CO2. 2-oxoglutarate dehydrogenase (E1-like) component of the 2-oxoglutarate dehydrogenase multienzyme complex (OGDHC) which mediates the decarboxylation of alpha-ketoglutarate in the tricarboxylic acid cycle. The OGDHC complex catalyzes the overall conversion of 2-oxoglutarate to succinyl-CoA and CO(2) while reducing NAD(+) to NADH. The OGDHC complex is mainly active in the mitochondrion. Involved in the inhibition of cell proliferation and in apoptosis. The polypeptide is 2-oxoglutarate dehydrogenase-like, mitochondrial (OGDHL) (Pongo abelii (Sumatran orangutan)).